We begin with the raw amino-acid sequence, 66 residues long: Large ribosomal subunit protein uL29 (66 aa).

It belongs to the universal ribosomal protein uL29 family.

This Helicobacter pylori (strain P12) protein is Large ribosomal subunit protein uL29.